Here is a 154-residue protein sequence, read N- to C-terminus: Crossover junction endodeoxyribonuclease RuvC (154 aa).

Residues aspartate 7, glutamate 67, and aspartate 139 contribute to the active site. Residues aspartate 7, glutamate 67, and aspartate 139 each coordinate Mg(2+).

The protein belongs to the RuvC family. In terms of assembly, homodimer which binds Holliday junction (HJ) DNA. The HJ becomes 2-fold symmetrical on binding to RuvC with unstacked arms; it has a different conformation from HJ DNA in complex with RuvA. In the full resolvosome a probable DNA-RuvA(4)-RuvB(12)-RuvC(2) complex forms which resolves the HJ. Requires Mg(2+) as cofactor.

It is found in the cytoplasm. The enzyme catalyses Endonucleolytic cleavage at a junction such as a reciprocal single-stranded crossover between two homologous DNA duplexes (Holliday junction).. The RuvA-RuvB-RuvC complex processes Holliday junction (HJ) DNA during genetic recombination and DNA repair. Endonuclease that resolves HJ intermediates. Cleaves cruciform DNA by making single-stranded nicks across the HJ at symmetrical positions within the homologous arms, yielding a 5'-phosphate and a 3'-hydroxyl group; requires a central core of homology in the junction. The consensus cleavage sequence is 5'-(A/T)TT(C/G)-3'. Cleavage occurs on the 3'-side of the TT dinucleotide at the point of strand exchange. HJ branch migration catalyzed by RuvA-RuvB allows RuvC to scan DNA until it finds its consensus sequence, where it cleaves and resolves the cruciform DNA. The polypeptide is Crossover junction endodeoxyribonuclease RuvC (Synechococcus sp. (strain CC9605)).